A 459-amino-acid polypeptide reads, in one-letter code: Cysteine--tRNA ligase (459 aa).

Zn(2+) is bound at residue cysteine 28. The short motif at 30-40 is the 'HIGH' region element; the sequence is VTIYDLCHIGH. Zn(2+)-binding residues include cysteine 209, histidine 234, and glutamate 238. Positions 266-270 match the 'KMSKS' region motif; the sequence is KMSKS. Lysine 269 is a binding site for ATP.

This sequence belongs to the class-I aminoacyl-tRNA synthetase family. In terms of assembly, monomer. The cofactor is Zn(2+).

Its subcellular location is the cytoplasm. The catalysed reaction is tRNA(Cys) + L-cysteine + ATP = L-cysteinyl-tRNA(Cys) + AMP + diphosphate. The sequence is that of Cysteine--tRNA ligase from Shewanella baltica (strain OS195).